A 136-amino-acid polypeptide reads, in one-letter code: MNTVHVNVVTPDGAAFEGDARMVIAKSVTGELGILPKHIPMVTPLDVSVLKLRHEDGGRTLIAISGGFMEVRPDTVTILAETAEMADKIDYDRASAAKVRAERRLQDTKLSELEFRRAELALKKAINRLSIRDMKE.

The protein belongs to the ATPase epsilon chain family. As to quaternary structure, F-type ATPases have 2 components, CF(1) - the catalytic core - and CF(0) - the membrane proton channel. CF(1) has five subunits: alpha(3), beta(3), gamma(1), delta(1), epsilon(1). CF(0) has three main subunits: a, b and c.

It localises to the cell membrane. Produces ATP from ADP in the presence of a proton gradient across the membrane. This chain is ATP synthase epsilon chain, found in Exiguobacterium sp. (strain ATCC BAA-1283 / AT1b).